The following is a 236-amino-acid chain: MQSIKYKRVMLKISGEALAGTNGYGIDFEVANRIAKEIKEIVDLGIEVGAVVGGGNIWRGRNGKGMDRTTADYMGMLATCINALALQDSLENMDVDTRVQTAIEMKQVAEPFIRRRAMRHLEKGRVVIFAGGTGNPYFSTDTTAALRAAEIEADVILLAKKVDGVYDKDPHKYDDAIKFDNLTYMEVLEKNLQVMDSTATSLCMDNNIPIIVFGLDVSGNIRKAVLGEKIGTIVSK.

12–15 (KISG) is a binding site for ATP. An involved in allosteric activation by GTP region spans residues 20–25 (GTNGYG). G54 is a binding site for UMP. The ATP site is built by G55 and R59. Residues D72 and 133–140 (TGNPYFST) contribute to the UMP site. Residues Y166 and D169 each coordinate ATP.

Belongs to the UMP kinase family. Homohexamer.

The protein localises to the cytoplasm. It catalyses the reaction UMP + ATP = UDP + ADP. It functions in the pathway pyrimidine metabolism; CTP biosynthesis via de novo pathway; UDP from UMP (UMPK route): step 1/1. With respect to regulation, allosterically activated by GTP. Inhibited by UTP. Functionally, catalyzes the reversible phosphorylation of UMP to UDP. This chain is Uridylate kinase, found in Clostridium acetobutylicum (strain ATCC 824 / DSM 792 / JCM 1419 / IAM 19013 / LMG 5710 / NBRC 13948 / NRRL B-527 / VKM B-1787 / 2291 / W).